Consider the following 219-residue polypeptide: uncharacterized protein (219 aa).

This is an uncharacterized protein from Escherichia coli (strain K12).